The chain runs to 1077 residues: Error-prone DNA polymerase (1077 aa).

This sequence belongs to the DNA polymerase type-C family. DnaE2 subfamily.

Its subcellular location is the cytoplasm. It carries out the reaction DNA(n) + a 2'-deoxyribonucleoside 5'-triphosphate = DNA(n+1) + diphosphate. DNA polymerase involved in damage-induced mutagenesis and translesion synthesis (TLS). It is not the major replicative DNA polymerase. In Brucella abortus biovar 1 (strain 9-941), this protein is Error-prone DNA polymerase.